We begin with the raw amino-acid sequence, 287 residues long: Ketoacyl reductase HetN (287 aa).

11–35 (LTGASRGLGVYIARALAKEQATVVC) lines the NAD(+) pocket. Serine 142 serves as a coordination point for substrate. Residue tyrosine 155 is the Proton acceptor of the active site.

Belongs to the short-chain dehydrogenases/reductases (SDR) family.

Its function is as follows. May be involved in repressing heterocyst differentiation and may be essential for preventing all vegetative cells from differentiating. In Nostoc sp. (strain PCC 7120 / SAG 25.82 / UTEX 2576), this protein is Ketoacyl reductase HetN (hetN).